Reading from the N-terminus, the 342-residue chain is Probable dual-specificity RNA methyltransferase RlmN (342 aa).

Residue Glu91 is the Proton acceptor of the active site. Positions 97–326 (YKFGNTACVS…CTVRRELGSD (230 aa)) constitute a Radical SAM core domain. A disulfide bond links Cys104 and Cys331. Residues Cys111, Cys115, and Cys118 each coordinate [4Fe-4S] cluster. S-adenosyl-L-methionine-binding positions include 157-158 (GE), Ser189, 212-214 (SLH), and Asn288. Cys331 serves as the catalytic S-methylcysteine intermediate.

Belongs to the radical SAM superfamily. RlmN family. [4Fe-4S] cluster serves as cofactor.

It localises to the cytoplasm. It carries out the reaction adenosine(2503) in 23S rRNA + 2 reduced [2Fe-2S]-[ferredoxin] + 2 S-adenosyl-L-methionine = 2-methyladenosine(2503) in 23S rRNA + 5'-deoxyadenosine + L-methionine + 2 oxidized [2Fe-2S]-[ferredoxin] + S-adenosyl-L-homocysteine. It catalyses the reaction adenosine(37) in tRNA + 2 reduced [2Fe-2S]-[ferredoxin] + 2 S-adenosyl-L-methionine = 2-methyladenosine(37) in tRNA + 5'-deoxyadenosine + L-methionine + 2 oxidized [2Fe-2S]-[ferredoxin] + S-adenosyl-L-homocysteine. In terms of biological role, specifically methylates position 2 of adenine 2503 in 23S rRNA and position 2 of adenine 37 in tRNAs. The sequence is that of Probable dual-specificity RNA methyltransferase RlmN from Caldanaerobacter subterraneus subsp. tengcongensis (strain DSM 15242 / JCM 11007 / NBRC 100824 / MB4) (Thermoanaerobacter tengcongensis).